The following is a 1058-amino-acid chain: Carbamoyl phosphate synthase large chain (1058 aa).

A carboxyphosphate synthetic domain region spans residues 1–401 (MPKRKDIKTI…SLLKAIRSLE (401 aa)). ATP is bound by residues arginine 129, arginine 169, glycine 175, glycine 176, lysine 208, isoleucine 210, glutamate 215, glycine 241, isoleucine 242, histidine 243, glutamine 284, and glutamate 298. The region spanning 133–327 (RDLMNELNEP…IAKIAAKIAV (195 aa)) is the ATP-grasp 1 domain. The Mg(2+) site is built by glutamine 284, glutamate 298, and asparagine 300. Residues glutamine 284, glutamate 298, and asparagine 300 each coordinate Mn(2+). The interval 402-546 (YGVHHLGLPN…YSTYEFENES (145 aa)) is oligomerization domain. The segment at 547–929 (TRSDKEKIVV…ALYKGLTAAG (383 aa)) is carbamoyl phosphate synthetic domain. Residues 671-861 (EKLLIGLKIP…VANIAMQCIL (191 aa)) form the ATP-grasp 2 domain. ATP is bound by residues arginine 707, arginine 746, leucine 748, glutamate 752, glycine 777, valine 778, histidine 779, serine 780, glutamine 820, and glutamate 832. 3 residues coordinate Mg(2+): glutamine 820, glutamate 832, and asparagine 834. Residues glutamine 820, glutamate 832, and asparagine 834 each contribute to the Mn(2+) site. One can recognise an MGS-like domain in the interval 930-1058 (IKIKDYGRVL…ESMSFRVQTL (129 aa)). An allosteric domain region spans residues 930-1058 (IKIKDYGRVL…ESMSFRVQTL (129 aa)).

The protein belongs to the CarB family. In terms of assembly, composed of two chains; the small (or glutamine) chain promotes the hydrolysis of glutamine to ammonia, which is used by the large (or ammonia) chain to synthesize carbamoyl phosphate. Tetramer of heterodimers (alpha,beta)4. It depends on Mg(2+) as a cofactor. Requires Mn(2+) as cofactor.

It catalyses the reaction hydrogencarbonate + L-glutamine + 2 ATP + H2O = carbamoyl phosphate + L-glutamate + 2 ADP + phosphate + 2 H(+). The enzyme catalyses hydrogencarbonate + NH4(+) + 2 ATP = carbamoyl phosphate + 2 ADP + phosphate + 2 H(+). The protein operates within amino-acid biosynthesis; L-arginine biosynthesis; carbamoyl phosphate from bicarbonate: step 1/1. Its pathway is pyrimidine metabolism; UMP biosynthesis via de novo pathway; (S)-dihydroorotate from bicarbonate: step 1/3. Functionally, large subunit of the glutamine-dependent carbamoyl phosphate synthetase (CPSase). CPSase catalyzes the formation of carbamoyl phosphate from the ammonia moiety of glutamine, carbonate, and phosphate donated by ATP, constituting the first step of 2 biosynthetic pathways, one leading to arginine and/or urea and the other to pyrimidine nucleotides. The large subunit (synthetase) binds the substrates ammonia (free or transferred from glutamine from the small subunit), hydrogencarbonate and ATP and carries out an ATP-coupled ligase reaction, activating hydrogencarbonate by forming carboxy phosphate which reacts with ammonia to form carbamoyl phosphate. The chain is Carbamoyl phosphate synthase large chain from Fusobacterium nucleatum subsp. nucleatum (strain ATCC 25586 / DSM 15643 / BCRC 10681 / CIP 101130 / JCM 8532 / KCTC 2640 / LMG 13131 / VPI 4355).